A 193-amino-acid polypeptide reads, in one-letter code: NADH-quinone oxidoreductase subunit B (193 aa).

[4Fe-4S] cluster contacts are provided by C72, C73, C137, and C167.

The protein belongs to the complex I 20 kDa subunit family. As to quaternary structure, NDH-1 is composed of 14 different subunits. Subunits NuoB, C, D, E, F, and G constitute the peripheral sector of the complex. It depends on [4Fe-4S] cluster as a cofactor.

The protein resides in the cell inner membrane. The catalysed reaction is a quinone + NADH + 5 H(+)(in) = a quinol + NAD(+) + 4 H(+)(out). In terms of biological role, NDH-1 shuttles electrons from NADH, via FMN and iron-sulfur (Fe-S) centers, to quinones in the respiratory chain. The immediate electron acceptor for the enzyme in this species is believed to be ubiquinone. Couples the redox reaction to proton translocation (for every two electrons transferred, four hydrogen ions are translocated across the cytoplasmic membrane), and thus conserves the redox energy in a proton gradient. The polypeptide is NADH-quinone oxidoreductase subunit B (Caulobacter vibrioides (strain ATCC 19089 / CIP 103742 / CB 15) (Caulobacter crescentus)).